A 353-amino-acid chain; its full sequence is Photosystem II protein D1 (353 aa).

At Thr2 the chain carries N-acetylthreonine. Thr2 carries the post-translational modification Phosphothreonine. 3 consecutive transmembrane segments (helical) span residues 29–46, 118–133, and 142–156; these read YIGWFGVLMIPTLLTATS, HFLLGVACYMGREWEL, and WIAVAYSAPVAAATA. Position 118 (His118) interacts with chlorophyll a. Tyr126 provides a ligand contact to pheophytin a. 2 residues coordinate [CaMn4O5] cluster: Asp170 and Glu189. Residues 197–218 form a helical membrane-spanning segment; sequence FHMLGVAGVFGGSLFSAMHGSL. A chlorophyll a-binding site is contributed by His198. Residues His215 and 264–265 each bind a quinone; that span reads SF. Residue His215 coordinates Fe cation. His272 contributes to the Fe cation binding site. Residues 274–288 form a helical membrane-spanning segment; sequence FLAAWPVVGIWFTAL. Residues His332, Glu333, Asp342, and Ala344 each contribute to the [CaMn4O5] cluster site. Positions 345-353 are excised as a propeptide; that stretch reads AIEAPSTNG.

This sequence belongs to the reaction center PufL/M/PsbA/D family. PSII is composed of 1 copy each of membrane proteins PsbA, PsbB, PsbC, PsbD, PsbE, PsbF, PsbH, PsbI, PsbJ, PsbK, PsbL, PsbM, PsbT, PsbX, PsbY, PsbZ, Psb30/Ycf12, at least 3 peripheral proteins of the oxygen-evolving complex and a large number of cofactors. It forms dimeric complexes. The D1/D2 heterodimer binds P680, chlorophylls that are the primary electron donor of PSII, and subsequent electron acceptors. It shares a non-heme iron and each subunit binds pheophytin, quinone, additional chlorophylls, carotenoids and lipids. D1 provides most of the ligands for the Mn4-Ca-O5 cluster of the oxygen-evolving complex (OEC). There is also a Cl(-1) ion associated with D1 and D2, which is required for oxygen evolution. The PSII complex binds additional chlorophylls, carotenoids and specific lipids. serves as cofactor. Tyr-161 forms a radical intermediate that is referred to as redox-active TyrZ, YZ or Y-Z. In terms of processing, C-terminally processed by CTPA; processing is essential to allow assembly of the oxygen-evolving complex and thus photosynthetic growth.

It localises to the plastid. The protein resides in the chloroplast thylakoid membrane. It catalyses the reaction 2 a plastoquinone + 4 hnu + 2 H2O = 2 a plastoquinol + O2. In terms of biological role, photosystem II (PSII) is a light-driven water:plastoquinone oxidoreductase that uses light energy to abstract electrons from H(2)O, generating O(2) and a proton gradient subsequently used for ATP formation. It consists of a core antenna complex that captures photons, and an electron transfer chain that converts photonic excitation into a charge separation. The D1/D2 (PsbA/PsbD) reaction center heterodimer binds P680, the primary electron donor of PSII as well as several subsequent electron acceptors. This chain is Photosystem II protein D1, found in Citrus sinensis (Sweet orange).